A 102-amino-acid polypeptide reads, in one-letter code: Ferredoxin, 2Fe-2S (102 aa).

[2Fe-2S] cluster-binding residues include Cys-11, Cys-24, Cys-56, and Cys-60.

The protein belongs to the 2Fe2S Shethna-type ferredoxin family. [2Fe-2S] cluster serves as cofactor.

Ferredoxins are iron-sulfur proteins that transfer electrons in a wide variety of metabolic reactions. This chain is Ferredoxin, 2Fe-2S, found in Clostridium pasteurianum.